A 1472-amino-acid polypeptide reads, in one-letter code: ABC multidrug transporter atrI (1472 aa).

A disordered region spans residues Met-1–Asp-28. One can recognise an ABC transporter 1 domain in the interval Phe-134 to Pro-384. Residues Asn-143, Asn-277, Asn-308, and Asn-332 are each glycosylated (N-linked (GlcNAc...) asparagine). The next 7 membrane-spanning stretches (helical) occupy residues Ile-506–Tyr-526, Ala-530–Leu-550, Ile-580–Leu-600, Ser-605–Phe-625, Met-639–Val-659, Pro-664–Ala-684, and Phe-744–Leu-764. Over residues Ala-784–Gly-793 the composition is skewed to basic and acidic residues. The disordered stretch occupies residues Ala-784–Ile-821. Polar residues predominate over residues Val-804–Ile-821. The region spanning Phe-828–Gly-1070 is the ABC transporter 2 domain. Gly-864–Thr-871 is a binding site for ATP. 6 consecutive transmembrane segments (helical) span residues Tyr-1168 to Phe-1188, Val-1204 to Thr-1224, Phe-1244 to Phe-1264, Leu-1282 to Ile-1302, Glu-1309 to Met-1329, and Gly-1337 to Ala-1357. N-linked (GlcNAc...) asparagine glycosylation occurs at Asn-1402. The chain crosses the membrane as a helical span at residues Phe-1433–Cys-1453. A glycan (N-linked (GlcNAc...) asparagine) is linked at Asn-1460.

Belongs to the ABC transporter superfamily. ABCG family. PDR (TC 3.A.1.205) subfamily.

The protein resides in the cell membrane. The catalysed reaction is itraconazole(in) + ATP + H2O = itraconazole(out) + ADP + phosphate + H(+). The enzyme catalyses voriconazole(in) + ATP + H2O = voriconazole(out) + ADP + phosphate + H(+). It carries out the reaction fluconazole(in) + ATP + H2O = fluconazole(out) + ADP + phosphate + H(+). Its function is as follows. Pleiotropic ABC efflux transporter involved in the basal level of azole susceptibility. Confers resistance to fluconazole, itraconazole and voriconazole. This Aspergillus fumigatus (strain ATCC MYA-4609 / CBS 101355 / FGSC A1100 / Af293) (Neosartorya fumigata) protein is ABC multidrug transporter atrI.